The chain runs to 527 residues: Probable protein kinase UbiB (527 aa).

The Protein kinase domain occupies 118–501 (DFERVPVASA…QKRTNRLLQG (384 aa)). ATP is bound by residues 124-132 (VASASIAQV) and K150. Residue D285 is the Proton acceptor of the active site. A helical membrane pass occupies residues 502 to 522 (LLMFGVAVGVGAVLARAWLAI).

It belongs to the ABC1 family. UbiB subfamily.

The protein resides in the cell inner membrane. Its pathway is cofactor biosynthesis; ubiquinone biosynthesis [regulation]. Its function is as follows. Is probably a protein kinase regulator of UbiI activity which is involved in aerobic coenzyme Q (ubiquinone) biosynthesis. This is Probable protein kinase UbiB from Paraburkholderia phymatum (strain DSM 17167 / CIP 108236 / LMG 21445 / STM815) (Burkholderia phymatum).